The following is a 296-amino-acid chain: Nucleotide-binding protein SMU_1306c (296 aa).

13 to 20 (GMSGAGKT) lines the ATP pocket. A GTP-binding site is contributed by 63-66 (DMRS).

The protein belongs to the RapZ-like family.

In terms of biological role, displays ATPase and GTPase activities. The chain is Nucleotide-binding protein SMU_1306c from Streptococcus mutans serotype c (strain ATCC 700610 / UA159).